Consider the following 471-residue polypeptide: MKHKVKRIHFVGIGGAGMSGIAEVLANLGFMVSGSDLGENAATRRLAALGVQVRVGHAAENVAGADAVVISTAVRNDNPEVVAARSRHVPIVPRAQMLAELMRLKHGIAIAGTHGKTTTTSLVASILAEGGMDPTFVIGGKLNAAGANARLGKGDFLVAEADESDASFLLLTPVISVITNIDADHMDTYGHDFARLKQAFVDFLQHLPFYGVAVLCEDDPHVRSIMPLVSKQVVRYGLSESANIRAENVRAEGGRMLFDVVRTNGSVSRLPIELNLPGVHNVLNALAAIAVATEVQVPDAAIIKALAEFRGVGRRFQRYGEVALRDAEGTPQGSCTLIDDYGHHPVEMAATLAAARGAFPGRRLVLAFQPHRYTRTRDCFEDFVKVLSTVDALLLAEVYAAGEAPVVAADGRSLARAIRVAGKVEPVFVEDIDEMPATVLAAVRDGDVVITMGAGSIGAVPGKLASSEELV.

112–118 serves as a coordination point for ATP; that stretch reads GTHGKTT.

Belongs to the MurCDEF family.

The protein resides in the cytoplasm. It catalyses the reaction UDP-N-acetyl-alpha-D-muramate + L-alanine + ATP = UDP-N-acetyl-alpha-D-muramoyl-L-alanine + ADP + phosphate + H(+). It participates in cell wall biogenesis; peptidoglycan biosynthesis. Functionally, cell wall formation. The chain is UDP-N-acetylmuramate--L-alanine ligase from Aromatoleum aromaticum (strain DSM 19018 / LMG 30748 / EbN1) (Azoarcus sp. (strain EbN1)).